The primary structure comprises 364 residues: 3-isopropylmalate dehydrogenase (364 aa).

Residue 79–92 (GPKWEHLPPDQQPE) participates in NAD(+) binding. Arg100, Arg110, Arg139, and Asp228 together coordinate substrate. Positions 228, 252, and 256 each coordinate Mg(2+). 286–298 (GSAPDIAGKNIAN) is an NAD(+) binding site.

This sequence belongs to the isocitrate and isopropylmalate dehydrogenases family. LeuB type 1 subfamily. In terms of assembly, homodimer. Mg(2+) serves as cofactor. It depends on Mn(2+) as a cofactor.

It is found in the cytoplasm. It catalyses the reaction (2R,3S)-3-isopropylmalate + NAD(+) = 4-methyl-2-oxopentanoate + CO2 + NADH. The protein operates within amino-acid biosynthesis; L-leucine biosynthesis; L-leucine from 3-methyl-2-oxobutanoate: step 3/4. Its function is as follows. Catalyzes the oxidation of 3-carboxy-2-hydroxy-4-methylpentanoate (3-isopropylmalate) to 3-carboxy-4-methyl-2-oxopentanoate. The product decarboxylates to 4-methyl-2 oxopentanoate. This chain is 3-isopropylmalate dehydrogenase, found in Escherichia coli (strain UTI89 / UPEC).